Reading from the N-terminus, the 116-residue chain is uncharacterized protein (116 aa).

Positions Met-1–Ala-15 are cleaved as a signal peptide.

This is an uncharacterized protein from Haemophilus influenzae (strain ATCC 51907 / DSM 11121 / KW20 / Rd).